Consider the following 349-residue polypeptide: Insulin gene enhancer protein ISL-1 (349 aa).

LIM zinc-binding domains lie at C17–D70 and C79–H133. Residues T181–S240 constitute a DNA-binding region (homeobox). The disordered stretch occupies residues V312–A349. Residues S321–V343 show a composition bias toward polar residues.

The protein localises to the nucleus. Functionally, acts as a transcriptional regulator. Recognizes and binds to the consensus octamer binding site 5'-ATAATTAA-3' in promoter of target genes. Plays a fundamental role in the gene regulatory network essential for retinal ganglion cell (RGC) differentiation. Binds to insulin gene enhancer sequences. Defines subclasses of motoneurons that segregate into columns in the spinal cord and select distinct axon pathways. Acts in conjunction with LHX1, LHX3 and ISL2. Binds to insulin gene enhancer sequences. Essential for heart development. The protein is Insulin gene enhancer protein ISL-1 (ISL1) of Gallus gallus (Chicken).